Reading from the N-terminus, the 778-residue chain is Tubulin polyglutamylase ttll6 (778 aa).

The disordered stretch occupies residues 1 to 43 (MGTPAERSVSEVCRCEPDPGLEGEGWGSDTHAEPSNTPIPLPV). In terms of domain architecture, TTL spans 51 to 393 (KKKLWINLTN…LGACDRRKIT (343 aa)). ATP-binding positions include Lys-168, 174 to 175 (QG), 196 to 199 (QVYM), and 209 to 211 (KFD). Residue Gln-174 participates in a protein binding. Arg-235 contacts L-glutamate. Residue 257–258 (TN) coordinates ATP. Residues Tyr-259 and Lys-277 each coordinate L-glutamate. Asp-340, Glu-353, and Asn-355 together coordinate Mg(2+). Residue His-356 coordinates a protein. The segment at 365 to 445 (RLDREVKDSL…MGGFRRIFPR (81 aa)) is c-MTBD region. Lys-371 contacts L-glutamate. Composition is skewed to basic and acidic residues over residues 402 to 418 (ERLQQNRSREARNEEPR), 485 to 510 (KQEQKERDKKGSRKQDLQGESAGEKV), 533 to 542 (SVREETPVSL), and 760 to 778 (LSHDLRKAPRRVLPHEHSL). Disordered stretches follow at residues 402–422 (ERLQQNRSREARNEEPRQSQA), 485–542 (KQEQ…PVSL), and 758–778 (PHLSHDLRKAPRRVLPHEHSL).

It belongs to the tubulin--tyrosine ligase family. It depends on Mg(2+) as a cofactor.

The protein resides in the cytoplasm. It localises to the cytoskeleton. It is found in the cilium axoneme. Its subcellular location is the cilium basal body. The catalysed reaction is L-glutamyl-[protein] + L-glutamate + ATP = gamma-L-glutamyl-L-glutamyl-[protein] + ADP + phosphate + H(+). It carries out the reaction (L-glutamyl)(n)-gamma-L-glutamyl-L-glutamyl-[protein] + L-glutamate + ATP = (L-glutamyl)(n+1)-gamma-L-glutamyl-L-glutamyl-[protein] + ADP + phosphate + H(+). Its function is as follows. Polyglutamylase which modifies both tubulin and non-tubulin proteins, generating alpha-linked polyglutamate side chains on the gamma-carboxyl group of specific glutamate residues of target proteins. Preferentially mediates ATP-dependent long polyglutamate chain elongation over the initiation step of the polyglutamylation reaction. Preferentially modifies the alpha-tubulin tail over a beta-tail. Mediates microtubule polyglutamylation in cilia axoneme, which is important for ciliary structural formation and motility. Polyglutamylates olfactory cilia, necessary for the regulation of ciliary structure and beating. The sequence is that of Tubulin polyglutamylase ttll6 from Danio rerio (Zebrafish).